Here is a 508-residue protein sequence, read N- to C-terminus: ATP synthase subunit alpha, chloroplastic (508 aa).

172-179 (GDRQTGKT) lines the ATP pocket.

The protein belongs to the ATPase alpha/beta chains family. In terms of assembly, F-type ATPases have 2 components, CF(1) - the catalytic core - and CF(0) - the membrane proton channel. CF(1) has five subunits: alpha(3), beta(3), gamma(1), delta(1), epsilon(1). CF(0) has four main subunits: a, b, b' and c.

The protein resides in the plastid. It localises to the chloroplast thylakoid membrane. It catalyses the reaction ATP + H2O + 4 H(+)(in) = ADP + phosphate + 5 H(+)(out). Produces ATP from ADP in the presence of a proton gradient across the membrane. The alpha chain is a regulatory subunit. The chain is ATP synthase subunit alpha, chloroplastic from Psilotum nudum (Whisk fern).